A 258-amino-acid polypeptide reads, in one-letter code: Small ribosomal subunit protein uS2 (258 aa).

The tract at residues 222–258 (GKALRDQDEAEQVEPVSQEEKDEVVAEAMSEADFEEQ) is disordered.

Belongs to the universal ribosomal protein uS2 family.

The polypeptide is Small ribosomal subunit protein uS2 (Campylobacter fetus subsp. fetus (strain 82-40)).